A 766-amino-acid polypeptide reads, in one-letter code: Pentatricopeptide repeat-containing protein At5g28460 (766 aa).

PPR repeat units follow at residues 151–181 (TIVA…LDSN), 184–218 (NSQV…ESVF), 221–257 (NRIT…GVSP), 258–292 (NSVW…KTPL), 293–327 (EAPP…KIRP), 328–358 (DVVT…MRGK), 369–404 (DSIH…RCVP), 405–439 (NAVT…EIKP), 440–474 (NVVT…GVKG), 475–509 (NVVT…GCSP), 510–544 (DAKI…GFSL), 545–579 (DLLA…GKKP), 580–614 (DSIT…GLDP), 615–650 (TVTT…KVNP), 651–685 (NTVI…MVRP), and 686–720 (NVET…SCEP).

The protein belongs to the PPR family. P subfamily.

This chain is Pentatricopeptide repeat-containing protein At5g28460, found in Arabidopsis thaliana (Mouse-ear cress).